The primary structure comprises 281 residues: Transcription factor lfc1 (281 aa).

The zn(2)-C6 fungal-type DNA-binding region spans 60 to 87 (CLTCRMKKIKCDETKPTCARCTHGQREC).

The protein localises to the nucleus. In terms of biological role, transcription factor that acts as a negative regulator of basidioma development via repressing the expression of genes involved in basidioma development, including hydrophobins such as Hyd-1 and Hyd-8, lectins such as JRL1, as well as the fruiting body differentiation gene FVFD16. In Flammulina velutipes (Agaricus velutipes), this protein is Transcription factor lfc1.